The primary structure comprises 280 residues: Hydroxyethylthiazole kinase (280 aa).

A substrate-binding site is contributed by methionine 50. ATP is bound by residues lysine 125 and threonine 178. Glycine 205 contacts substrate.

The protein belongs to the Thz kinase family. It depends on Mg(2+) as a cofactor.

It carries out the reaction 5-(2-hydroxyethyl)-4-methylthiazole + ATP = 4-methyl-5-(2-phosphooxyethyl)-thiazole + ADP + H(+). Its pathway is cofactor biosynthesis; thiamine diphosphate biosynthesis; 4-methyl-5-(2-phosphoethyl)-thiazole from 5-(2-hydroxyethyl)-4-methylthiazole: step 1/1. Its function is as follows. Catalyzes the phosphorylation of the hydroxyl group of 4-methyl-5-beta-hydroxyethylthiazole (THZ). The sequence is that of Hydroxyethylthiazole kinase from Lacticaseibacillus casei (strain BL23) (Lactobacillus casei).